We begin with the raw amino-acid sequence, 741 residues long: Cytosolic phospholipase A2 (741 aa).

Residues 1–116 (MSNIIVEHQY…KVAQMEHVTL (116 aa)) enclose the C2 domain. Residues 1 to 172 (MSNIIVEHQY…IKKLLKMENP (172 aa)) are phospholipid binding. Asp34, Thr35, Asp37, Asn59, Asp87, Ala88, and Asn89 together coordinate Ca(2+). The PLA2c domain occupies 132-729 (VCASTDLRFS…SLSEIENKKF (598 aa)). Ser223 serves as the catalytic Nucleophile. The segment at 406 to 453 (TSSSTMEEELEQIKPEHIVGDDSADNEEETQRGGTESADAEDERQRHA) is disordered. Residues 416–425 (EQIKPEHIVG) are compositionally biased toward basic and acidic residues. Position 498 is a phosphoserine; by MAPK (Ser498). The Proton acceptor role is filled by Asp540.

Activated by phosphorylation on a serine residue.

Its subcellular location is the cytoplasm. The protein localises to the cytoplasmic vesicle. The enzyme catalyses a 1,2-diacyl-sn-glycero-3-phosphocholine + H2O = a 1-acyl-sn-glycero-3-phosphocholine + a fatty acid + H(+). It catalyses the reaction a 1-acyl-sn-glycero-3-phosphocholine + H2O = sn-glycerol 3-phosphocholine + a fatty acid + H(+). Its activity is regulated as follows. Stimulated by agonists such as ATP, EGF, thrombin and bradykinin as well as by cytosolic Ca(2+). Selectively hydrolyzes arachidonyl phospholipids in the sn-2 position releasing arachidonic acid. Together with its lysophospholipid activity, it is implicated in the initiation of the inflammatory response. The chain is Cytosolic phospholipase A2 (pla2g4a) from Danio rerio (Zebrafish).